Consider the following 725-residue polypeptide: MTKELPSGYFQGPFRPYKTFQPSLTERPLSKFEQFAVFSILLISLIRLYKLYIPDRVVFDEIHLIKYIKNYYDGSIFVDIHPPLGKLIYFYITKLFSFDKDFQIDIIGDLYPEDFPYLWLRLFSGICGIGHVLLTFFTLRITCNSVISIVITILICLENSMVTVSRLILLEGPSLFVQSLVIYNYKAFTTRIPFTGCWYFNLFVTGIALGLNISLKISGLFTFAWVGILTCVQLWEILGDLRISIWQFIKHLVLRVVAFIMVPLTIYCSVFYIHFENLPNEGPGSGFLTPHFRSTLDDYQQQPLQVLYGSTITIKHNALEKYLHSHDLTYPRGSNLQQVTLYDFPDVNNEWVIETKQKYNEEKLMTDQREVKDGDVVRLYHKATGHYLHVNDIRPPISEHEYSYEVNGNETRGLLGNEDYEFKIRMLVKKPHAENDLPLIKLRTTETIFQLIHQATRCNLMSHEQKLPDWGEYQNEVLCVKEPTIPNTLWYVESSSHPLLKDTKKLKTFPKFSFWSKLIETHKVMFNLNKGFTNPHPYASKPLDWPLLSRGIAFFSNYNLKSIDEESSLIYYLGNVAIYYSVFFVGLIAIFKCAIYSFIKLNPYASPPSSSKSSPYANFYNNSWPYLVGWFINYIPYCLMSRNLYLHHYLSALNFGILLLSQYLNYRVAKNKIIGGIITATIFVSAIYCFYEFIPITYGLPWTLDQCNSHKWFPNWDIDCMTYTG.

6 helical membrane-spanning segments follow: residues 34-54 (QFAV…LYIP), 117-137 (YLWL…LTFF), 145-165 (SVIS…VTVS), 192-212 (IPFT…LGLN), 219-239 (GLFT…EILG), and 256-276 (VVAF…IHFE). 3 MIR domains span residues 303 to 356 (PLQV…IETK), 368 to 427 (QREV…IRML), and 439 to 495 (LIKL…VESS). The N-linked (GlcNAc...) asparagine glycan is linked to Asn-409. Transmembrane regions (helical) follow at residues 570 to 590 (IYYL…LIAI), 619 to 639 (FYNN…PYCL), 644 to 664 (LYLH…SQYL), and 673 to 693 (IIGG…FYEF).

Belongs to the glycosyltransferase 39 family.

The protein resides in the endoplasmic reticulum membrane. The enzyme catalyses a di-trans,poly-cis-dolichyl beta-D-mannosyl phosphate + L-seryl-[protein] = 3-O-(alpha-D-mannosyl)-L-seryl-[protein] + a di-trans,poly-cis-dolichyl phosphate + H(+). The catalysed reaction is a di-trans,poly-cis-dolichyl beta-D-mannosyl phosphate + L-threonyl-[protein] = 3-O-(alpha-D-mannosyl)-L-threonyl-[protein] + a di-trans,poly-cis-dolichyl phosphate + H(+). It participates in protein modification; protein glycosylation. Protein mannosyltransferase (PMT) involved in hyphal morphogenesis and drug sensitivity. Transfers mannose from Dol-P-mannose to Ser or Thr residues on proteins. PMT1, PMT2 and PMT4 account for most of the protein-O-glycosylation activity, while PMT5 and PMT6 may specifically modulate a much narrower spectrum of target proteins. Required for biofilm formation. This Candida albicans (strain SC5314 / ATCC MYA-2876) (Yeast) protein is Dolichyl-phosphate-mannose--protein mannosyltransferase 5.